We begin with the raw amino-acid sequence, 138 residues long: ATP synthase epsilon chain (138 aa).

It belongs to the ATPase epsilon chain family. In terms of assembly, F-type ATPases have 2 components, CF(1) - the catalytic core - and CF(0) - the membrane proton channel. CF(1) has five subunits: alpha(3), beta(3), gamma(1), delta(1), epsilon(1). CF(0) has three main subunits: a, b and c.

It is found in the cell inner membrane. Functionally, produces ATP from ADP in the presence of a proton gradient across the membrane. This chain is ATP synthase epsilon chain, found in Delftia acidovorans (strain DSM 14801 / SPH-1).